Consider the following 122-residue polypeptide: NADH-quinone oxidoreductase subunit A (122 aa).

The next 3 membrane-spanning stretches (helical) occupy residues 10-30, 67-87, and 91-111; these read LIIF…LTAG, FALL…WAVV, and LGLF…IGLI.

It belongs to the complex I subunit 3 family. In terms of assembly, NDH-1 is composed of 14 different subunits. Subunits NuoA, H, J, K, L, M, N constitute the membrane sector of the complex.

It is found in the cell membrane. It carries out the reaction a quinone + NADH + 5 H(+)(in) = a quinol + NAD(+) + 4 H(+)(out). In terms of biological role, NDH-1 shuttles electrons from NADH, via FMN and iron-sulfur (Fe-S) centers, to quinones in the respiratory chain. The immediate electron acceptor for the enzyme in this species is believed to be a menaquinone. Couples the redox reaction to proton translocation (for every two electrons transferred, four hydrogen ions are translocated across the cytoplasmic membrane), and thus conserves the redox energy in a proton gradient. The chain is NADH-quinone oxidoreductase subunit A from Geobacillus kaustophilus (strain HTA426).